The sequence spans 511 residues: Potassium voltage-gated channel subfamily A member 10 (511 aa).

The segment at I22 to K50 is disordered. Residues V218–L238 form a helical membrane-spanning segment. An N-linked (GlcNAc...) asparagine glycan is attached at N256. A helical transmembrane segment spans residues F271–V292. C293 is lipidated: S-palmitoyl cysteine. A helical membrane pass occupies residues I303–L323. N-linked (GlcNAc...) asparagine glycosylation is present at N334. The helical; Voltage-sensor transmembrane segment at I339–S358 threads the bilayer. Residues L375 to F395 traverse the membrane as a helical segment. A Selectivity filter motif is present at residues T421–D426. Residues I436–I456 traverse the membrane as a helical segment. Positions S489 to K511 are disordered. N498 carries an N-linked (GlcNAc...) asparagine glycan.

It belongs to the potassium channel family. A (Shaker) (TC 1.A.1.2) subfamily. Kv1.8/KCNA10 sub-subfamily. In terms of assembly, homotetramer. Interacts with KCN4B/POMP. Interaction with KCN4B/POMP is necessary for the modulation of channel activity by cAMP. Detected in kidney, in proximal tubules, glomerular endothelium, in vascular endothelium and in smooth muscle cells.

The protein localises to the membrane. It catalyses the reaction K(+)(in) = K(+)(out). With respect to regulation, the channel activity is up-regulated by cAMP. In terms of biological role, voltage-gated potassium ion channel that mediates K(+) permeability of excitable membranes. When opened in response to the voltage difference across the membrane, KCNA10 channel selectively allows the flow of potassium ions across the membrane down their electrochemical gradient. The protein is Potassium voltage-gated channel subfamily A member 10 of Homo sapiens (Human).